Consider the following 492-residue polypeptide: Prenylcysteine oxidase 1-like (492 aa).

The N-terminal stretch at 1 to 21 (MAHAARLLAALAALLAAAATG) is a signal peptide. N340 carries an N-linked (GlcNAc...) asparagine glycan.

It belongs to the prenylcysteine oxidase family. It depends on FAD as a cofactor.

It localises to the secreted. In terms of biological role, likely to have oxidoreductase activity. Required in the mevalonate pathway to regulate prenylation and enhances the bactericidal activity of neutrophils. In Bos taurus (Bovine), this protein is Prenylcysteine oxidase 1-like (PCYOX1L).